The chain runs to 138 residues: Acidic phospholipase A2 Tpu-E6a (138 aa).

A signal peptide spans methionine 1–glycine 16. Intrachain disulfides connect cysteine 42–cysteine 131, cysteine 44–cysteine 60, cysteine 59–cysteine 111, cysteine 65–cysteine 138, cysteine 66–cysteine 104, cysteine 73–cysteine 97, and cysteine 91–cysteine 102. Ca(2+)-binding residues include tyrosine 43, glycine 45, and glycine 47. The active site involves histidine 63. A Ca(2+)-binding site is contributed by aspartate 64. The active site involves aspartate 105.

In terms of assembly, monomer. Requires Ca(2+) as cofactor. As to expression, expressed by the venom gland.

It localises to the secreted. It carries out the reaction a 1,2-diacyl-sn-glycero-3-phosphocholine + H2O = a 1-acyl-sn-glycero-3-phosphocholine + a fatty acid + H(+). In terms of biological role, snake venom phospholipase A2 (PLA2) that impairs hemostasis. It weakly inhibits ADP-induced platelet aggregation when tested on platelet rich plasma from human and rabbit blood (15-25% of inhibition at 5-10 ug of enzyme), and dose-dependently inhibits blood coagulation, possibly by inhibiting thrombin activation. Exhibits high hydrolytic activities toward L-dipalmitoyl phosphatidylcholine. PLA2 catalyzes the calcium-dependent hydrolysis of the 2-acyl groups in 3-sn-phosphoglycerides. This chain is Acidic phospholipase A2 Tpu-E6a, found in Craspedocephalus puniceus (Flat-nosed pitviper).